A 624-amino-acid chain; its full sequence is tRNA uridine 5-carboxymethylaminomethyl modification enzyme MnmG (624 aa).

FAD contacts are provided by residues 13–18 (GGGHAG), Val-125, and Ser-180. An NAD(+)-binding site is contributed by 273–287 (GPRYCPSIEDKIVRF). Gln-370 provides a ligand contact to FAD.

It belongs to the MnmG family. In terms of assembly, homodimer. Heterotetramer of two MnmE and two MnmG subunits. FAD is required as a cofactor.

Its subcellular location is the cytoplasm. NAD-binding protein involved in the addition of a carboxymethylaminomethyl (cmnm) group at the wobble position (U34) of certain tRNAs, forming tRNA-cmnm(5)s(2)U34. This Legionella pneumophila (strain Corby) protein is tRNA uridine 5-carboxymethylaminomethyl modification enzyme MnmG.